We begin with the raw amino-acid sequence, 513 residues long: Lysine--tRNA ligase (513 aa).

Residues Glu-422 and Glu-429 each contribute to the Mg(2+) site.

This sequence belongs to the class-II aminoacyl-tRNA synthetase family. Homodimer. It depends on Mg(2+) as a cofactor.

It is found in the cytoplasm. The enzyme catalyses tRNA(Lys) + L-lysine + ATP = L-lysyl-tRNA(Lys) + AMP + diphosphate. This Tolumonas auensis (strain DSM 9187 / NBRC 110442 / TA 4) protein is Lysine--tRNA ligase.